Consider the following 224-residue polypeptide: ATP-dependent dethiobiotin synthetase BioD (224 aa).

13–18 (NVGKTI) provides a ligand contact to ATP. Mg(2+) is bound at residue threonine 17. Lysine 38 is a catalytic residue. Serine 42 contributes to the substrate binding site. ATP is bound by residues aspartate 55, 116 to 119 (EGAG), 176 to 177 (NN), and asparagine 211. Mg(2+) contacts are provided by aspartate 55 and glutamate 116.

It belongs to the dethiobiotin synthetase family. As to quaternary structure, homodimer. Requires Mg(2+) as cofactor.

The protein localises to the cytoplasm. The catalysed reaction is (7R,8S)-7,8-diammoniononanoate + CO2 + ATP = (4R,5S)-dethiobiotin + ADP + phosphate + 3 H(+). It participates in cofactor biosynthesis; biotin biosynthesis; biotin from 7,8-diaminononanoate: step 1/2. Its function is as follows. Catalyzes a mechanistically unusual reaction, the ATP-dependent insertion of CO2 between the N7 and N8 nitrogen atoms of 7,8-diaminopelargonic acid (DAPA, also called 7,8-diammoniononanoate) to form a ureido ring. This chain is ATP-dependent dethiobiotin synthetase BioD, found in Buchnera aphidicola subsp. Acyrthosiphon pisum (strain 5A).